The following is a 292-amino-acid chain: Poly(U)-specific endoribonuclease-B (292 aa).

An EndoU domain is found at 8 to 285 (VNHELSKLFN…IGTAYPALLS (278 aa)). Active-site residues include His-162, His-178, and Lys-224.

This sequence belongs to the ENDOU family. In terms of assembly, monomer. Mn(2+) is required as a cofactor.

The protein localises to the nucleus. It catalyses the reaction uridylyl-uridylyl-ribonucleotide-RNA = a 3'-end uridylyl-2',3'-cyclophospho-uridine-RNA + a 5'-end dephospho-ribonucleoside-RNA. In terms of biological role, poly(U)-specific endoribonuclease involved in the processing of intron-encoded box C/D snoRNAs, such as U16 and U86. Releases products that have 2',3'-cyclic phosphate termini at the 3'-end. The polypeptide is Poly(U)-specific endoribonuclease-B (endou-b) (Xenopus laevis (African clawed frog)).